The primary structure comprises 344 residues: Succinylglutamate desuccinylase (344 aa).

3 residues coordinate Zn(2+): H63, E66, and H160. Residue E224 is part of the active site.

It belongs to the AspA/AstE family. Succinylglutamate desuccinylase subfamily. It depends on Zn(2+) as a cofactor.

It carries out the reaction N-succinyl-L-glutamate + H2O = L-glutamate + succinate. The protein operates within amino-acid degradation; L-arginine degradation via AST pathway; L-glutamate and succinate from L-arginine: step 5/5. Transforms N(2)-succinylglutamate into succinate and glutamate. The chain is Succinylglutamate desuccinylase from Shewanella sp. (strain W3-18-1).